Here is a 132-residue protein sequence, read N- to C-terminus: MDSRTGELITARQAENGVFIWEIENPLYFKINQVEDMQYTRTRIYSVQIRFNHNLRRALDLHKAYLNFQVWTTSMTASGSNYLARFRQLVLLYLDRLGVISINNVIRSVRFATDRSYVNYVLENHSIKYKFY.

Belongs to the geminiviridae replication enhancer protein family. As to quaternary structure, homooligomer. Interacts with the replication-associated protein (REP). Interacts with host proliferating cell nuclear antigen (PCNA). Interacts with host retinoblastoma-related protein 1 (RBR1), and may thereby deregulate the host cell cycle. Oligomerization and interaction with PCNA are necessary for optimal replication enhancement.

Increases viral DNA accumulation. Enhances infectivity and symptom expression. In Potato yellow mosaic virus (isolate Venezuela) (PYMV), this protein is Replication enhancer protein.